Here is a 663-residue protein sequence, read N- to C-terminus: Alpha-amylase MalA (663 aa).

Disordered stretches follow at residues 1-28 and 80-135; these read MHHP…PTAT and GTLE…LTLR. A compositionally biased stretch (gly residues) spans 92-111; that stretch reads RSGGHSGGVSGGRSGPGRSG. Aspartate 411 acts as the Nucleophile in catalysis. Glutamate 440 acts as the Proton donor in catalysis.

This sequence belongs to the glycosyl hydrolase 13 family.

It is found in the cytoplasm. It carries out the reaction Endohydrolysis of (1-&gt;4)-alpha-D-glucosidic linkages in polysaccharides containing three or more (1-&gt;4)-alpha-linked D-glucose units.. It functions in the pathway glycan degradation; starch degradation. Stable and active over a broad range of NaCl concentrations (0.5 to 4.2 M NaCl), with maximal activity at 2.6 M NaCl. 83% and 94% of the maximum activity at 0.6 and 4.2 M NaCl, respectively. Active and stable also in KCl. Its function is as follows. Alpha-amylase that cleaves starch into oligosaccharides, the first step in starch degradation. Endo-acting enzyme which prefers a linear polysaccharide to branched polysaccharides hydrolyzing alpha-1,4 glucosidic bonds efficiently. Also has transglycosylation activity, but does not act on alpha-1,6 bonds. Higher activities of 100%, 79% and 67.8% against amylose, soluble starch and amylopectin, respectively. Lower activity of 22% against glycogen and faint or no activity against alpha-, beta- and gamma-cyclodextrin. This is Alpha-amylase MalA from Haloarcula japonica (strain ATCC 49778 / DSM 6131 / JCM 7785 / NBRC 101032 / NCIMB 13157 / TR-1).